The following is a 546-amino-acid chain: CCA tRNA nucleotidyltransferase, mitochondrial (546 aa).

It belongs to the tRNA nucleotidyltransferase/poly(A) polymerase family.

It localises to the mitochondrion. The protein localises to the cytoplasm. Its subcellular location is the nucleus. The catalysed reaction is a tRNA precursor + 2 CTP + ATP = a tRNA with a 3' CCA end + 3 diphosphate. Functionally, nucleotidyltransferase that catalyzes the addition and repair of the essential 3'-terminal CCA sequence in tRNAs, which is necessary for the attachment of amino acids to the 3' terminus of tRNA molecules, using CTP and ATP as substrates. tRNA 3'-terminal CCA addition is required both for tRNA processing and repair. Also involved in tRNA surveillance by mediating tandem CCA addition to generate a CCACCA at the 3' terminus of unstable tRNAs. While stable tRNAs receive only 3'-terminal CCA, unstable tRNAs are marked with CCACCA and rapidly degraded. The structural flexibility of RNA controls the choice between CCA versus CCACCA addition: following the first CCA addition cycle, nucleotide-binding to the active site triggers a clockwise screw motion, producing torque on the RNA. This ejects stable RNAs, whereas unstable RNAs are refolded while bound to the enzyme and subjected to a second CCA catalytic cycle. The sequence is that of CCA tRNA nucleotidyltransferase, mitochondrial (CCA1) from Saccharomyces cerevisiae (strain ATCC 204508 / S288c) (Baker's yeast).